Consider the following 705-residue polypeptide: uncharacterized protein (705 aa).

Catalysis depends on charge relay system residues Ser554 and His676.

This sequence belongs to the peptidase S9A family.

This is an uncharacterized protein from Sinorhizobium fredii (strain NBRC 101917 / NGR234).